The sequence spans 596 residues: Invasin CotH7 (596 aa).

The first 17 residues, 1-17, serve as a signal peptide directing secretion; sequence MKSLSFISLACLTAVHA. Residues Asn82, Asn146, Asn163, Asn169, Asn288, Asn440, and Asn544 are each glycosylated (N-linked (GlcNAc...) asparagine). Residues 528-544 show a composition bias toward low complexity; it reads SATIAAPATSESASQDN. The interval 528–557 is disordered; it reads SATIAAPATSESASQDNTSDDTDSASTSSS. The GPI-anchor amidated serine moiety is linked to residue Ser567. Residues 568 to 596 constitute a propeptide, removed in mature form; that stretch reads SASKSAPTFYCLQLVLYLSLSFKNLYKYI.

In terms of assembly, interacts with host integrin beta-1 ITGB1 on the cell surface of host alveolar epithelial cells.

The protein resides in the cell membrane. In terms of biological role, promotes invasion of host epithelial cells by adhering to receptors on the host cell surface to facilitate endocytosis of the pathogen into host cells. Probably binds integrin ITGA3:ITGB1 via ITGB1, on the cell surface of host alveolar epithelial cells. This Rhizopus delemar (strain RA 99-880 / ATCC MYA-4621 / FGSC 9543 / NRRL 43880) (Mucormycosis agent) protein is Invasin CotH7.